The sequence spans 128 residues: uncharacterized protein (128 aa).

The chain crosses the membrane as a helical span at residues 8–28; the sequence is YQAIYLIFAGFTVFGLLLHFY.

The protein resides in the membrane. This is an uncharacterized protein from Haemophilus influenzae (strain ATCC 51907 / DSM 11121 / KW20 / Rd).